Reading from the N-terminus, the 387-residue chain is Low specificity L-threonine aldolase (387 aa).

N6-(pyridoxal phosphate)lysine is present on Lys213. Lys228 participates in a covalent cross-link: Glycyl lysine isopeptide (Lys-Gly) (interchain with G-Cter in ubiquitin). Phosphoserine occurs at positions 367 and 369. Thr370 bears the Phosphothreonine mark.

This sequence belongs to the threonine aldolase family. Homotetramer. Pyridoxal 5'-phosphate serves as cofactor.

It carries out the reaction L-threonine = acetaldehyde + glycine. It catalyses the reaction L-allo-threonine = acetaldehyde + glycine. It participates in amino-acid biosynthesis; glycine biosynthesis; glycine from L-allo-threonine: step 1/1. Its pathway is amino-acid degradation; L-threonine degradation via aldolase pathway; acetaldehyde and glycine from L-threonine: step 1/1. Catalyzes the cleavage of L-allo-threonine and L-threonine to glycine and acetaldehyde. The sequence is that of Low specificity L-threonine aldolase (GLY1) from Saccharomyces cerevisiae (strain ATCC 204508 / S288c) (Baker's yeast).